A 93-amino-acid chain; its full sequence is MASTRGSGRPWSAKENKAFERALAVYDKDTPDRWANVARAVEGRTPEEVKKHYEILVEDIKYIESGKVPFPNYRTTGGNMKTDEKRFRNLKIR.

Residues 6 to 61 (GSGRPWSAKENKAFERALAVYDKDTPDRWANVARAVEGRTPEEVKKHYEILVEDIK) enclose the SANT domain.

In terms of tissue distribution, specifically expressed in the dorsal region of developing flowers.

It is found in the nucleus. Its function is as follows. Involved in the dorsovental asymmetry of flowers. Promotes dorsal identity. This is Transcription factor RADIALIS (RAD) from Antirrhinum majus (Garden snapdragon).